Consider the following 188-residue polypeptide: ATP-dependent Clp protease proteolytic subunit 1 (188 aa).

The active-site Nucleophile is Ser90. His115 is an active-site residue.

The protein belongs to the peptidase S14 family. Fourteen ClpP subunits assemble into 2 heptameric rings which stack back to back to give a disk-like structure with a central cavity, resembling the structure of eukaryotic proteasomes.

It localises to the cytoplasm. It catalyses the reaction Hydrolysis of proteins to small peptides in the presence of ATP and magnesium. alpha-casein is the usual test substrate. In the absence of ATP, only oligopeptides shorter than five residues are hydrolyzed (such as succinyl-Leu-Tyr-|-NHMec, and Leu-Tyr-Leu-|-Tyr-Trp, in which cleavage of the -Tyr-|-Leu- and -Tyr-|-Trp bonds also occurs).. Its function is as follows. Cleaves peptides in various proteins in a process that requires ATP hydrolysis. Has a chymotrypsin-like activity. Plays a major role in the degradation of misfolded proteins. This chain is ATP-dependent Clp protease proteolytic subunit 1, found in Corynebacterium jeikeium (strain K411).